Here is a 117-residue protein sequence, read N- to C-terminus: Large-conductance mechanosensitive channel (117 aa).

3 helical membrane passes run Glu7–Phe27, Ile30–Val50, and Gly64–Val84.

It belongs to the MscL family. As to quaternary structure, homopentamer.

The protein resides in the cell membrane. Channel that opens in response to stretch forces in the membrane lipid bilayer. May participate in the regulation of osmotic pressure changes within the cell. The protein is Large-conductance mechanosensitive channel of Staphylococcus saprophyticus subsp. saprophyticus (strain ATCC 15305 / DSM 20229 / NCIMB 8711 / NCTC 7292 / S-41).